Consider the following 472-residue polypeptide: Eukaryotic translation initiation factor 2 subunit 3, Y-linked (472 aa).

A2 carries the post-translational modification N-acetylalanine. Residue S16 is modified to Phosphoserine. Residues 39-247 (QATINIGTIG…YIVKKIPVPL (209 aa)) form the tr-type G domain. A G1 region spans residues 48-55 (GHVAHGKS). GTP is bound at residue 51 to 56 (AHGKST). The G2 stretch occupies residues 76-80 (NITIK). Positions 134 to 137 (DCPG) are G3. GTP contacts are provided by residues 190–193 (NKID) and 225–227 (SAQ). Positions 190-193 (NKID) are G4. The tract at residues 225–227 (SAQ) is G5.

This sequence belongs to the TRAFAC class translation factor GTPase superfamily. Classic translation factor GTPase family. EIF2G subfamily. In terms of assembly, eIF2 is a heterotrimer composed of an alpha (EIF2S1), a beta (EIF2S2) and a gamma (Eif2s3x and Eif2s3y) chain. eIF2 is member of the 43S pre-initiation complex (43S PIC). In terms of tissue distribution, widely expressed in males.

It catalyses the reaction GTP + H2O = GDP + phosphate + H(+). Functionally, member of the eIF2 complex that functions in the early steps of protein synthesis by forming a ternary complex with GTP and initiator tRNA. This complex binds to a 40S ribosomal subunit, followed by mRNA binding to form the 43S pre-initiation complex (43S PIC). Junction of the 60S ribosomal subunit to form the 80S initiation complex is preceded by hydrolysis of the GTP bound to eIF2 and release of an eIF2-GDP binary complex. In order for eIF2 to recycle and catalyze another round of initiation, the GDP bound to eIF2 must exchange with GTP by way of a reaction catalyzed by eIF-2B. Along with its paralog on chromosome X, may contribute to spermatogenesis up to the round spermatid stage. This chain is Eukaryotic translation initiation factor 2 subunit 3, Y-linked (Eif2s3y), found in Rattus norvegicus (Rat).